The sequence spans 3122 residues: Large tegument protein deneddylase (3122 aa).

The segment at 1–248 is deubiquitination activity; that stretch reads MIPAALPHPT…SETYLQDEPF (248 aa). One can recognise a Peptidase C76 domain in the interval 20-238; the sequence is VVTGVRNQFA…TAAALHLYGA (219 aa). Residues Cys40, Asp172, and His174 contribute to the active site. Disordered stretches follow at residues 281 to 367 and 387 to 496; these read GSGP…GDAA and RARY…PPGA. Residues 343 to 353 show a composition bias toward low complexity; the sequence is SAPDAAASGPP. 2 stretches are compositionally biased toward basic residues: residues 387–400 and 425–436; these read RARY…RRRP and KAKKKSAPKKKA. The segment covering 437–454 has biased composition (low complexity); sequence PVAAEVPASSPTPIAATV. The interval 548 to 578 is interaction with inner tegument protein; it reads LELCVIFFFERVLAFLIENGARTHTQAGVAG. Disordered regions lie at residues 2494–2539, 2570–2974, and 3006–3059; these read YQRP…ADPG, ASDD…THLP, and SDDE…SQFG. 2 stretches are compositionally biased toward pro residues: residues 2578–2590 and 2637–2654; these read TPNP…PPPA and PSPP…PPPA. The segment covering 2655–2667 has biased composition (low complexity); it reads FSGSAAAFSAAVP. Residues 2668 to 2681 are compositionally biased toward basic residues; that stretch reads RVRRSRRTRAKSRA. Composition is skewed to pro residues over residues 2690-2700 and 2710-2719; these read GWRPPALPAPV and PDQPPTPESA. The segment covering 2734 to 2743 has biased composition (low complexity); sequence ASARGAFPAP. Pro residues-rich tracts occupy residues 2744-2753 and 2775-2785; these read TLAPIPPPPA and SPTPPRGPAAG. Composition is skewed to low complexity over residues 2786-2807 and 2814-2825; these read PPRR…SLPS and HAAAVSAAAAAV. The segment covering 2841–2852 has biased composition (pro residues); that stretch reads SPPPLAPGPVAP. Over residues 2853–2867 the composition is skewed to low complexity; that stretch reads SEPLCGWVVPGGPVA. 11 repeat units span residues 2891-2895, 2896-2900, 2901-2905, 2906-2910, 2911-2915, 2916-2920, 2921-2925, 2926-2930, 2931-2935, 2936-2940, and 2941-2945. The segment at 2891-2945 is 11 X 5 AA tandem repeats of P-Q-P-P-L; the sequence is PQPPLPQPPLPQPPLPQPPLPQPPLPQPPLPQPPLPQPPLPQPPLPQPPLPQPPL. The span at 2891–2947 shows a compositional bias: pro residues; sequence PQPPLPQPPLPQPPLPQPPLPQPPLPQPPLPQPPLPQPPLPQPPLPQPPLPQPPLPP. Composition is skewed to polar residues over residues 2950-2959 and 2965-2974; these read RTLTPQSRDS and SPTHTNTHLP. Over residues 3006-3020 the composition is skewed to basic and acidic residues; it reads SDDEHSDADSLRFSD. The segment covering 3029–3045 has biased composition (pro residues); that stretch reads PLPPEPHLPPADEPPGP.

Belongs to the herpesviridae large tegument protein family. As to quaternary structure, interacts with host CUL1 and CUL4A; these interactions inhibit the E3 ligase activity of cullins. Interacts with inner tegument protein. Interacts with capsid vertex specific component CVC2. Interacts with the major capsid protein/MCP. Proteolytically processed, possibly into several polypeptides. Enzymatic activity is only detectable following cleavage of the UL36 protein, which occurs late during viral replication.

The protein localises to the virion tegument. Its subcellular location is the host cytoplasm. It localises to the host nucleus. The catalysed reaction is Thiol-dependent hydrolysis of ester, thioester, amide, peptide and isopeptide bonds formed by the C-terminal Gly of ubiquitin (a 76-residue protein attached to proteins as an intracellular targeting signal).. Functionally, large tegument protein that plays multiple roles in the viral cycle. During viral entry, remains associated with the capsid while most of the tegument is detached and participates in the capsid transport toward the host nucleus. Plays a role in the routing of the capsid at the nuclear pore complex and subsequent uncoating. Within the host nucleus, acts as a deneddylase and promotes the degradation of nuclear CRLs (cullin-RING ubiquitin ligases) and thereby stabilizes nuclear CRL substrates, while cytoplasmic CRLs remain unaffected. These modifications prevent host cell cycle S-phase progression and create a favorable environment allowing efficient viral genome replication. Participates later in the secondary envelopment of capsids. Indeed, plays a linker role for the association of the outer viral tegument to the capsids together with the inner tegument protein. The protein is Large tegument protein deneddylase of Human herpesvirus 2 (strain HG52) (HHV-2).